We begin with the raw amino-acid sequence, 270 residues long: Phospholysine phosphohistidine inorganic pyrophosphate phosphatase (270 aa).

The Mg(2+) site is built by D17 and S19. Substrate contacts are provided by residues 17 to 19, 54 to 55, and K189; these read DIS and TN. D214 serves as a coordination point for Mg(2+).

It belongs to the HAD-like hydrolase superfamily. In terms of assembly, homodimer. The cofactor is Mg(2+).

It is found in the cytoplasm. Its subcellular location is the nucleus. It carries out the reaction diphosphate + H2O = 2 phosphate + H(+). Its function is as follows. Phosphatase that hydrolyzes imidodiphosphate, 3-phosphohistidine and 6-phospholysine. Has broad substrate specificity and can also hydrolyze inorganic diphosphate, but with lower efficiency. This chain is Phospholysine phosphohistidine inorganic pyrophosphate phosphatase (Lhpp), found in Rattus norvegicus (Rat).